A 137-amino-acid chain; its full sequence is Large-conductance mechanosensitive channel (137 aa).

The next 2 membrane-spanning stretches (helical) occupy residues 9-29 (AFAV…GAAF) and 79-99 (IQTI…VKVI).

The protein belongs to the MscL family. In terms of assembly, homopentamer.

The protein resides in the cell inner membrane. Functionally, channel that opens in response to stretch forces in the membrane lipid bilayer. May participate in the regulation of osmotic pressure changes within the cell. This Pseudomonas entomophila (strain L48) protein is Large-conductance mechanosensitive channel.